Consider the following 375-residue polypeptide: DnaJ homolog subfamily B member 12 (375 aa).

An N-acetylmethionine modification is found at Met-1. Over 1–243 (MESNKDEAER…DRRDNQGDGG (243 aa)) the chain is Cytoplasmic. The disordered stretch occupies residues 45–92 (ALIESLNQKPQTAGDQPPPTDTTHATHRKAGGTDAPSANGEAGGESTK). Residues 49 to 58 (SLNQKPQTAG) are compositionally biased toward polar residues. The J domain occupies 112 to 176 (YEILGVSRGA…RKQYDQFGDD (65 aa)). His-185 carries the post-translational modification Pros-methylhistidine. Residues 244–264 (LGVFVQLMPILILILVSALSQ) traverse the membrane as a helical segment. Residues 265–375 (LMVSSPPYSL…LSEVQASLHG (111 aa)) are Lumenal-facing.

It belongs to the DnaJ family. DNAJB12/DNAJB14 subfamily. As to quaternary structure, homodimer and homotetramer. Interacts (via J domain) with HSPA8/Hsc70. Forms a multiprotein complex, at least composed of DNAJB12, DNAJB14, HSPA8/Hsc70 and SGTA; interaction with DNAJB14 and HSPA8/Hsc70 is direct. Post-translationally, methylated at His-185 by METTL9.

It is found in the endoplasmic reticulum membrane. The protein localises to the nucleus membrane. In terms of biological role, acts as a co-chaperone with HSPA8/Hsc70; required to promote protein folding and trafficking, prevent aggregation of client proteins, and promote unfolded proteins to endoplasmic reticulum-associated degradation (ERAD) pathway. Acts by determining HSPA8/Hsc70's ATPase and polypeptide-binding activities. Can also act independently of HSPA8/Hsc70: together with DNAJB14, acts as a chaperone that promotes maturation of potassium channels KCND2 and KCNH2 by stabilizing nascent channel subunits and assembling them into tetramers. While stabilization of nascent channel proteins is dependent on HSPA8/Hsc70, the process of oligomerization of channel subunits is independent of HSPA8/Hsc70. When overexpressed, forms membranous structures together with DNAJB14 and HSPA8/Hsc70 within the nucleus; the role of these structures, named DJANGOs, is still unclear. (Microbial infection) In case of infection by polyomavirus, involved in the virus endoplasmic reticulum membrane penetration and infection. This is DnaJ homolog subfamily B member 12 from Homo sapiens (Human).